The primary structure comprises 170 residues: uncharacterized protein (170 aa).

A helical membrane pass occupies residues 96-116 (FSAISIGSFPIVLFLSLFFFD).

The protein resides in the membrane. This is an uncharacterized protein from Borreliella burgdorferi (strain ATCC 35210 / DSM 4680 / CIP 102532 / B31) (Borrelia burgdorferi).